Here is a 435-residue protein sequence, read N- to C-terminus: Uracil permease (435 aa).

A run of 12 helical transmembrane segments spans residues 17–37, 42–62, 67–87, 91–111, 122–142, 161–181, 191–213, 234–254, 311–331, 336–356, 376–396, and 399–419; these read FSWVSFSLQHLFAMFGSTILV, GMSPAVALVTSGIGTLAYLLI, IPAYLGSSFAFISPIILVKAT, GAAMVGAFLAGLVYGLIALLI, ILPPVVVGPVIIVIGLGLAST, LKHFSVAGVTLAITIICAIFL, LIGIIGGYLFALTQGIVNFQPVL, VTLGIAAAMVPVAFVTMSEHI, VFSVFVIGGAAVIALCFGFIG, LISSVPSAVMGGVSFLLFGII, NLIITSVILVIGVGGAFIQVS, and GFQVSGMALAAIVGVILNLIL.

Belongs to the nucleobase:cation symporter-2 (NCS2) (TC 2.A.40) family.

The protein resides in the cell membrane. Functionally, transport of uracil in the cell. The polypeptide is Uracil permease (pyrP) (Bacillus subtilis (strain 168)).